The chain runs to 137 residues: Small ribosomal subunit protein uS12 (137 aa).

The tract at residues 1 to 57 is disordered; sequence MPTINQLVRKPRRAQVTKSKSPAMNVGYNSRKKVQTKLASPQKRGVATRVGTMTPKK. Asp102 carries the post-translational modification 3-methylthioaspartic acid.

The protein belongs to the universal ribosomal protein uS12 family. As to quaternary structure, part of the 30S ribosomal subunit. Contacts proteins S8 and S17. May interact with IF1 in the 30S initiation complex.

With S4 and S5 plays an important role in translational accuracy. Functionally, interacts with and stabilizes bases of the 16S rRNA that are involved in tRNA selection in the A site and with the mRNA backbone. Located at the interface of the 30S and 50S subunits, it traverses the body of the 30S subunit contacting proteins on the other side and probably holding the rRNA structure together. The combined cluster of proteins S8, S12 and S17 appears to hold together the shoulder and platform of the 30S subunit. This is Small ribosomal subunit protein uS12 from Lactococcus lactis subsp. lactis (strain IL1403) (Streptococcus lactis).